Consider the following 318-residue polypeptide: 2-keto-3-deoxygluconate permease (318 aa).

Transmembrane regions (helical) follow at residues 10-30, 42-62, 76-96, 105-125, 139-159, 162-182, 199-219, 224-244, 263-283, and 289-309; these read IPGG…TFTP, GLIT…GASI, VLVI…GTFL, LLAG…NGGL, AGAF…VILG, GIAT…LIGF, VQTL…LAVI, FAGI…LIIA, AGAA…FAPV, and ALVA…TALW.

This sequence belongs to the KdgT transporter family.

It localises to the cell inner membrane. The enzyme catalyses 2-dehydro-3-deoxy-D-gluconate(in) + H(+)(in) = 2-dehydro-3-deoxy-D-gluconate(out) + H(+)(out). Its function is as follows. Catalyzes the proton-dependent uptake of 2-keto-3-deoxygluconate (KDG) into the cell. This chain is 2-keto-3-deoxygluconate permease, found in Pectobacterium carotovorum subsp. carotovorum (strain PC1).